Consider the following 315-residue polypeptide: Ribose-phosphate pyrophosphokinase (315 aa).

ATP-binding positions include 37-39 (DGE) and 96-97 (RQ). Mg(2+)-binding residues include His131 and Asp170. Lys194 is an active-site residue. D-ribose 5-phosphate-binding positions include Arg196, Asp220, and 224 to 228 (DTGGT).

The protein belongs to the ribose-phosphate pyrophosphokinase family. Class I subfamily. As to quaternary structure, homohexamer. Requires Mg(2+) as cofactor.

The protein localises to the cytoplasm. The catalysed reaction is D-ribose 5-phosphate + ATP = 5-phospho-alpha-D-ribose 1-diphosphate + AMP + H(+). Its pathway is metabolic intermediate biosynthesis; 5-phospho-alpha-D-ribose 1-diphosphate biosynthesis; 5-phospho-alpha-D-ribose 1-diphosphate from D-ribose 5-phosphate (route I): step 1/1. Involved in the biosynthesis of the central metabolite phospho-alpha-D-ribosyl-1-pyrophosphate (PRPP) via the transfer of pyrophosphoryl group from ATP to 1-hydroxyl of ribose-5-phosphate (Rib-5-P). The polypeptide is Ribose-phosphate pyrophosphokinase (Buchnera aphidicola subsp. Acyrthosiphon pisum (strain APS) (Acyrthosiphon pisum symbiotic bacterium)).